The chain runs to 145 residues: D-aminoacyl-tRNA deacylase (145 aa).

The Gly-cisPro motif, important for rejection of L-amino acids signature appears at 137 to 138 (GP).

It belongs to the DTD family. Homodimer.

Its subcellular location is the cytoplasm. The catalysed reaction is glycyl-tRNA(Ala) + H2O = tRNA(Ala) + glycine + H(+). It carries out the reaction a D-aminoacyl-tRNA + H2O = a tRNA + a D-alpha-amino acid + H(+). Its function is as follows. An aminoacyl-tRNA editing enzyme that deacylates mischarged D-aminoacyl-tRNAs. Also deacylates mischarged glycyl-tRNA(Ala), protecting cells against glycine mischarging by AlaRS. Acts via tRNA-based rather than protein-based catalysis; rejects L-amino acids rather than detecting D-amino acids in the active site. By recycling D-aminoacyl-tRNA to D-amino acids and free tRNA molecules, this enzyme counteracts the toxicity associated with the formation of D-aminoacyl-tRNA entities in vivo and helps enforce protein L-homochirality. The chain is D-aminoacyl-tRNA deacylase from Dinoroseobacter shibae (strain DSM 16493 / NCIMB 14021 / DFL 12).